A 186-amino-acid chain; its full sequence is Probable chorismate pyruvate-lyase (186 aa).

Positions 80, 118, and 170 each coordinate substrate.

This sequence belongs to the UbiC family.

It localises to the cytoplasm. The enzyme catalyses chorismate = 4-hydroxybenzoate + pyruvate. It participates in cofactor biosynthesis; ubiquinone biosynthesis. Functionally, removes the pyruvyl group from chorismate, with concomitant aromatization of the ring, to provide 4-hydroxybenzoate (4HB) for the ubiquinone pathway. The sequence is that of Probable chorismate pyruvate-lyase from Pseudomonas savastanoi pv. phaseolicola (strain 1448A / Race 6) (Pseudomonas syringae pv. phaseolicola (strain 1448A / Race 6)).